A 192-amino-acid chain; its full sequence is uncharacterized protein (192 aa).

The protein to R.meliloti RA0936 and y4nF.

This is an uncharacterized protein from Sinorhizobium fredii (strain NBRC 101917 / NGR234).